The chain runs to 414 residues: Glyceraldehyde-3-phosphate dehydrogenase, chloroplastic (414 aa).

The N-terminal 76 residues, 1–76 (MAFVAPVATV…GIVAATFGPT (76 aa)), are a transit peptide targeting the chloroplast. Residues 88-89 (RI), Asp112, and Arg156 each bind NADP(+). D-glyceraldehyde 3-phosphate-binding positions include 230–232 (SCT), Thr261, Arg276, 289–290 (TG), and Arg312. Cys231 functions as the Nucleophile in the catalytic mechanism. Asn394 contributes to the NADP(+) binding site.

This sequence belongs to the glyceraldehyde-3-phosphate dehydrogenase family. Homotetramer.

It localises to the plastid. It is found in the chloroplast. The catalysed reaction is D-glyceraldehyde 3-phosphate + phosphate + NADP(+) = (2R)-3-phospho-glyceroyl phosphate + NADPH + H(+). It functions in the pathway carbohydrate biosynthesis; Calvin cycle. In Chondrus crispus (Carrageen Irish moss), this protein is Glyceraldehyde-3-phosphate dehydrogenase, chloroplastic (GAPA).